The primary structure comprises 1103 residues: Mediator of RNA polymerase II transcription subunit 14 (1103 aa).

3 disordered regions span residues 1 to 63 (MPGV…GYKQ), 120 to 140 (VPPQ…LGNQ), and 1054 to 1103 (LETK…ITID). A compositionally biased stretch (polar residues) spans 1073 to 1103 (SGNTVQNARLENKSPQKAAATHSNADVITID).

The protein belongs to the Mediator complex subunit 14 family. Component of the Mediator complex.

The protein resides in the nucleus. In terms of biological role, component of the Mediator complex, a coactivator involved in the regulated transcription of nearly all RNA polymerase II-dependent genes. Mediator functions as a bridge to convey information from gene-specific regulatory proteins to the basal RNA polymerase II transcription machinery. Mediator is recruited to promoters by direct interactions with regulatory proteins and serves as a scaffold for the assembly of a functional preinitiation complex with RNA polymerase II and the general transcription factors. This Aspergillus terreus (strain NIH 2624 / FGSC A1156) protein is Mediator of RNA polymerase II transcription subunit 14 (rgr1).